A 612-amino-acid chain; its full sequence is Bifunctional 6(G)-fructosyltransferase/2,1-fructan:2,1-fructan 1-fructosyltransferase (612 aa).

The Cytoplasmic segment spans residues 1–24 (MDAQDIESRHPLIGARPRRRALRS). The chain crosses the membrane as a helical; Signal-anchor for type II membrane protein span at residues 25–45 (LSILLAAALLLGLVLFYANGT). At 46–612 (GSGTAVDPVR…NSTYNDFYHF (567 aa)) the chain is on the vacuolar side. Substrate is bound by residues 82–85 (YMND), Q101, and W109. D85 is an active-site residue. N111 is a glycosylation site (N-linked (GlcNAc...) asparagine). Substrate contacts are provided by residues 144–145 (WT) and 208–209 (RD). N-linked (GlcNAc...) asparagine glycans are attached at residues N216 and N230. E267 provides a ligand contact to substrate. A glycan (N-linked (GlcNAc...) asparagine) is linked at N465. Residues C466 and C514 are joined by a disulfide bond. N-linked (GlcNAc...) asparagine glycans are attached at residues N586 and N603.

Belongs to the glycosyl hydrolase 32 family. Post-translationally, might be processed in two N-terminal and C-terminal proteolytic fragments.

Its subcellular location is the vacuole membrane. It catalyses the reaction [1-beta-D-fructofuranosyl-(2-&gt;1)-]m+1 alpha-D-glucopyranoside + [1-beta-D-fructofuranosyl-(2-&gt;1)-]n+1 alpha-D-glucopyranoside = [1-beta-D-fructofuranosyl-(2-&gt;1)-]m alpha-D-glucopyranoside + [1-beta-D-fructofuranosyl-(2-&gt;1)-]n+1 beta-D-fructofuranosyl-(2-&gt;6)-alpha-D-glucopyranoside (m &gt; 0, n &gt;= 0).. The enzyme catalyses [beta-D-fructosyl-(2-&gt;1)-]m + [beta-D-fructosyl-(2-&gt;1)-]n = [beta-D-fructosyl-(2-&gt;1)-]m-1 + [beta-D-fructosyl-(2-&gt;1)-]n+1.. Functionally, involved in the synthesis of fructan of the inulin neoseries. Catalyzes a self-transfer between identical oligosaccharides of the 1-kestose series. In Allium cepa (Onion), this protein is Bifunctional 6(G)-fructosyltransferase/2,1-fructan:2,1-fructan 1-fructosyltransferase.